The chain runs to 210 residues: Imidazole glycerol phosphate synthase subunit HisH (210 aa).

In terms of domain architecture, Glutamine amidotransferase type-1 spans 3–210; the sequence is KVALLDYGSG…QLLRNWIDLL (208 aa). C81 acts as the Nucleophile in catalysis. Catalysis depends on residues H191 and E193.

As to quaternary structure, heterodimer of HisH and HisF.

It is found in the cytoplasm. The catalysed reaction is 5-[(5-phospho-1-deoxy-D-ribulos-1-ylimino)methylamino]-1-(5-phospho-beta-D-ribosyl)imidazole-4-carboxamide + L-glutamine = D-erythro-1-(imidazol-4-yl)glycerol 3-phosphate + 5-amino-1-(5-phospho-beta-D-ribosyl)imidazole-4-carboxamide + L-glutamate + H(+). The enzyme catalyses L-glutamine + H2O = L-glutamate + NH4(+). It functions in the pathway amino-acid biosynthesis; L-histidine biosynthesis; L-histidine from 5-phospho-alpha-D-ribose 1-diphosphate: step 5/9. Functionally, IGPS catalyzes the conversion of PRFAR and glutamine to IGP, AICAR and glutamate. The HisH subunit catalyzes the hydrolysis of glutamine to glutamate and ammonia as part of the synthesis of IGP and AICAR. The resulting ammonia molecule is channeled to the active site of HisF. The protein is Imidazole glycerol phosphate synthase subunit HisH of Corynebacterium diphtheriae (strain ATCC 700971 / NCTC 13129 / Biotype gravis).